Here is a 406-residue protein sequence, read N- to C-terminus: Tryptophan synthase beta chain (406 aa).

The residue at position 97 (Lys-97) is an N6-(pyridoxal phosphate)lysine.

Belongs to the TrpB family. As to quaternary structure, tetramer of two alpha and two beta chains. Pyridoxal 5'-phosphate is required as a cofactor.

The enzyme catalyses (1S,2R)-1-C-(indol-3-yl)glycerol 3-phosphate + L-serine = D-glyceraldehyde 3-phosphate + L-tryptophan + H2O. It functions in the pathway amino-acid biosynthesis; L-tryptophan biosynthesis; L-tryptophan from chorismate: step 5/5. In terms of biological role, the beta subunit is responsible for the synthesis of L-tryptophan from indole and L-serine. The sequence is that of Tryptophan synthase beta chain from Lacticaseibacillus casei (strain BL23) (Lactobacillus casei).